The sequence spans 606 residues: Pyruvate decarboxylase 2 (606 aa).

Substrate is bound by residues aspartate 68 and histidine 155. The interval 433–515 is thiamine pyrophosphate binding; sequence DSWFNCQKLK…FLINNGGYTI (83 aa). Positions 483, 510, and 512 each coordinate Mg(2+). Residue glutamate 516 participates in substrate binding.

The protein belongs to the TPP enzyme family. Homotetramer. It depends on a metal cation as a cofactor. Requires thiamine diphosphate as cofactor.

It carries out the reaction a 2-oxocarboxylate + H(+) = an aldehyde + CO2. The chain is Pyruvate decarboxylase 2 (PDC2) from Oryza sativa subsp. indica (Rice).